The primary structure comprises 494 residues: Splicing regulatory glutamine/lysine-rich protein 1 (494 aa).

Residues Arg69–Asn145 enclose the RRM domain. Phosphoserine occurs at positions 174 and 187. The interval Ile176 to Val494 is disordered. Basic and acidic residues predominate over residues Glu183–Gly192. The segment covering Gly193–Asp262 has biased composition (basic residues). Basic and acidic residues predominate over residues Lys263–Arg340. Thr348 is subject to Phosphothreonine. Residues Arg357–Ser373 are compositionally biased toward basic residues. Positions Arg404–Val474 are enriched in basic and acidic residues. Residues His476 to Ser486 show a composition bias toward polar residues. Lys490 is covalently cross-linked (Glycyl lysine isopeptide (Lys-Gly) (interchain with G-Cter in SUMO2)).

Belongs to the splicing factor SR family. As to quaternary structure, homodimer. Binds SFRS1, SFRS2, SFRS3 and SFRS6. Interacts with the spliceosome. Interacts with SREK1IP1.

The protein resides in the nucleus. In terms of biological role, participates in the regulation of alternative splicing by modulating the activity of other splice facors. Inhibits the splicing activity of SFRS1, SFRS2 and SFRS6. Augments the splicing activity of SFRS3. The polypeptide is Splicing regulatory glutamine/lysine-rich protein 1 (Srek1) (Mus musculus (Mouse)).